A 442-amino-acid polypeptide reads, in one-letter code: 26S proteasome non-ATPase regulatory subunit 12 homolog B (442 aa).

A coiled-coil region spans residues Met1–Ala129. A PCI domain is found at Glu232–Asp403.

It belongs to the proteasome subunit p55 family. As to quaternary structure, component of the 19S regulatory particle (RP/PA700) lid subcomplex of the 26S proteasome. The 26S proteasome is composed of a core protease (CP), known as the 20S proteasome, capped at one or both ends by the 19S regulatory particle (RP/PA700). The RP/PA700 complex is composed of at least 17 different subunits in two subcomplexes, the base and the lid, which form the portions proximal and distal to the 20S proteolytic core, respectively. In terms of tissue distribution, ubiquitous with highest expression in flowers.

It is found in the cytoplasm. Its subcellular location is the nucleus. Its function is as follows. Acts as a regulatory subunit of the 26 proteasome which is involved in the ATP-dependent degradation of ubiquitinated proteins. Acts redundantly with RPN5A. The sequence is that of 26S proteasome non-ATPase regulatory subunit 12 homolog B (RPN5B) from Arabidopsis thaliana (Mouse-ear cress).